A 152-amino-acid chain; its full sequence is Large ribosomal subunit protein bL9 (152 aa).

Belongs to the bacterial ribosomal protein bL9 family.

In terms of biological role, binds to the 23S rRNA. The sequence is that of Large ribosomal subunit protein bL9 from Nocardia farcinica (strain IFM 10152).